The sequence spans 320 residues: GPI-specific phospholipase A2-like PGAP3 (320 aa).

The first 20 residues, 1 to 20 (MAGLAARLVLLAGAAALASG), serve as a signal peptide directing secretion. At 21–98 (SQGDREPVYR…QFHGKWPFSR (78 aa)) the chain is on the lumenal side. N-linked (GlcNAc...) asparagine glycosylation occurs at Asn-40. A helical transmembrane segment spans residues 99–119 (FLFFQEPASAVASFLNGLASL). At 120–135 (VMLCRYRTFVPASSPM) the chain is on the cytoplasmic side. A helical membrane pass occupies residues 136 to 156 (YHTCVAFAWVSLNAWFWSTVF). Topologically, residues 157–169 (HTRDTDLTEKMDY) are lumenal. A helical membrane pass occupies residues 170-190 (FCASTVILHSIYLCCVRTVGL). At 191 to 193 (QHP) the chain is on the cytoplasmic side. A helical membrane pass occupies residues 194–214 (AVVSAFRALLLLMLTVHVSYL). Topologically, residues 215–224 (SLIRFDYGYN) are lumenal. The helical transmembrane segment at 225-245 (LVANVAIGLVNVVWWLAWCLW) threads the bilayer. Over 246 to 257 (NQRRLPHVRKCV) the chain is Cytoplasmic. The helical transmembrane segment at 258-278 (VVVLLLQGLSLLELLDFPPLF) threads the bilayer. Residue Trp-279 is a topological domain, lumenal. The chain crosses the membrane as a helical span at residues 280–299 (VLDAHAIWHISTIPVHVLFF). Topologically, residues 300–320 (SFLEDDSLYLLKESEDKFKLD) are cytoplasmic.

This sequence belongs to the PGAP3 family. In terms of tissue distribution, ubiquitously expressed, with highest levels in thyroid and placenta.

It localises to the golgi apparatus membrane. Its function is as follows. Involved in the fatty acid remodeling steps of GPI-anchor maturation where the unsaturated acyl chain at sn-2 of inositol phosphate is replaced by a saturated stearoyl chain. May catalyze the first step of the fatty acid remodeling, by removing the unsaturated acyl chain at sn-2 of inositol phosphate, generating a lyso-GPI intermediate. The fatty acid remodeling steps is critical for the integration of GPI-APs into lipid rafts. The polypeptide is GPI-specific phospholipase A2-like PGAP3 (Homo sapiens (Human)).